The sequence spans 90 residues: Conotoxin TxMMSK-06 (90 aa).

A signal peptide spans 1 to 22 (MMSKLGVLLTICLLLFPHTAVP). Residues 23 to 74 (LDGDQHADQPAERLQDDISSEHHPMLNSIRRREQNQFMSFTSVKLRDSRGER) constitute a propeptide that is removed on maturation. Residues 24–43 (DGDQHADQPAERLQDDISSE) form a disordered region. The segment covering 25 to 43 (GDQHADQPAERLQDDISSE) has biased composition (basic and acidic residues). 3 cysteine pairs are disulfide-bonded: Cys-75–Cys-89, Cys-76–Cys-85, and Cys-81–Cys-88. Residue Pro-87 is modified to 4-hydroxyproline. The residue at position 89 (Cys-89) is a Cysteine amide.

It belongs to the conotoxin M superfamily. Expressed by the venom duct.

It is found in the secreted. The protein is Conotoxin TxMMSK-06 of Conus textile (Cloth-of-gold cone).